A 214-amino-acid chain; its full sequence is Protein transport protein SEC22 (214 aa).

The Cytoplasmic segment spans residues 1 to 192; sequence MIKSTLIYRE…QKINFDLLIS (192 aa). One can recognise a Longin domain in the interval 6–117; the sequence is LIYREDGLPL…YQFVNFDNFL (112 aa). In terms of domain architecture, v-SNARE coiled-coil homology spans 132–192; that stretch reads NLDQLNQELV…QKINFDLLIS (61 aa). The residue at position 160 (Ser-160) is a Phosphoserine. The chain crosses the membrane as a helical; Anchor for type IV membrane protein span at residues 193-213; that stretch reads QYAPIVIVAFFFVFLFWWIFL. Residue Lys-214 is a topological domain, vesicular.

It belongs to the synaptobrevin family. In terms of assembly, component of two distinct SNARE complexes consisting of SED5, BOS1, BET1 and SEC22 or UFE1, USE1, SEC20 and SEC22. YKT6 can probably replace SEC22 as subunit of either complex. Interacts with SEC24, YIF1 and YIP1.

Its subcellular location is the membrane. The protein localises to the endoplasmic reticulum membrane. It localises to the golgi apparatus membrane. Nonessential SNARE involved in targeting and fusion of ER-derived transport vesicles with the Golgi complex as well as Golgi-derived retrograde transport vesicles with the ER. This chain is Protein transport protein SEC22 (SEC22), found in Saccharomyces cerevisiae (strain ATCC 204508 / S288c) (Baker's yeast).